The following is a 174-amino-acid chain: Large ribosomal subunit protein uL22 (174 aa).

This sequence belongs to the universal ribosomal protein uL22 family. In terms of assembly, part of the 50S ribosomal subunit.

Its function is as follows. This protein binds specifically to 23S rRNA. It makes multiple contacts with different domains of the 23S rRNA in the assembled 50S subunit and ribosome. In terms of biological role, the globular domain of the protein is located near the polypeptide exit tunnel on the outside of the subunit, while an extended beta-hairpin is found that lines the wall of the exit tunnel in the center of the 70S ribosome. The sequence is that of Large ribosomal subunit protein uL22 from Nanoarchaeum equitans (strain Kin4-M).